Reading from the N-terminus, the 242-residue chain is MKLSYFYVAADVPDGIIPESSVVIDVLRATTTIAWALENGADSVQVFADVDELKNQAKTFDSKEKILVGERGGKKLDGFDLGNSPLGVSSESVKGKRVFMSTTNGTRSLHRVRESKSLYTMALPNRKAIAERLKSDNPKEVWIVGSGWEGSYSLEDSLAAGALASLLMDQLESVQIVNDELMASIALWKNWENDVEGCLRIASHGQRLAGIGNHDDDFACCASLDNLSVIPKQIEMGVLRSN.

The protein belongs to the ComB family. Mg(2+) is required as a cofactor.

The catalysed reaction is (2R)-O-phospho-3-sulfolactate + H2O = (2R)-3-sulfolactate + phosphate. The polypeptide is Probable 2-phosphosulfolactate phosphatase (Prochlorococcus marinus (strain NATL1A)).